A 418-amino-acid chain; its full sequence is MGVVLITVVTVVDRHKALPNSSIDVDGHLWEFLSRQCFVLASEPLGIPIVVRSADLYRFSSSLLTLPKACRPIVRTRGATAIALDRNGVVYHEDRMGVSIEWLSVLSGYNHLNSSLIINQPYHLWVLGAADLCKPVFDLIPGPKRMVYAEIADEFHKSWQPPFVCGKLFETIPWTTVEHNHPLKLRAAGGEDTVVGECGFSKHSSNSLVRPPTVKRVIYAVVDPARLREIPAPGRPLPRRRPSEGGDARPEAALARSRARSVHGRRRDAAPPRGPAGARRPPGGRRDVDGTPTLGSVRPDIHTLKGRGLSPVPHLALWVEQWFLALQKPRLYTHHRLALHNIPSILKGEKREDTFEDNRRDELRHDDSRHRRHRGLPLRARSPPQCQPAPPRLGPHLRRSRGRGGRQLQRRGGAERRA.

2 disordered regions span residues 230–304 (IPAP…IHTL) and 353–418 (DTFE…ERRA). Residues 241–250 (RPSEGGDARP) show a composition bias toward basic and acidic residues. Basic residues predominate over residues 257 to 266 (SRARSVHGRR). Positions 353–369 (DTFEDNRRDELRHDDSR) are enriched in basic and acidic residues. The span at 395–404 (PHLRRSRGRG) shows a compositional bias: basic residues.

The protein belongs to the herpesviridae US2 family.

The protein is Gene 68 protein of Equine herpesvirus 1 (strain Ab4p) (EHV-1).